We begin with the raw amino-acid sequence, 433 residues long: 3-phosphoshikimate 1-carboxyvinyltransferase (433 aa).

The 3-phosphoshikimate site is built by Lys-23, Ser-24, and Arg-28. A phosphoenolpyruvate-binding site is contributed by Lys-23. Positions 95 and 123 each coordinate phosphoenolpyruvate. Positions 170, 171, 172, 198, 317, and 344 each coordinate 3-phosphoshikimate. Residue Gln-172 coordinates phosphoenolpyruvate. The active-site Proton acceptor is Asp-317. Phosphoenolpyruvate contacts are provided by Arg-348, Arg-391, and Lys-416.

Belongs to the EPSP synthase family. In terms of assembly, monomer.

It is found in the cytoplasm. The catalysed reaction is 3-phosphoshikimate + phosphoenolpyruvate = 5-O-(1-carboxyvinyl)-3-phosphoshikimate + phosphate. Its pathway is metabolic intermediate biosynthesis; chorismate biosynthesis; chorismate from D-erythrose 4-phosphate and phosphoenolpyruvate: step 6/7. In terms of biological role, catalyzes the transfer of the enolpyruvyl moiety of phosphoenolpyruvate (PEP) to the 5-hydroxyl of shikimate-3-phosphate (S3P) to produce enolpyruvyl shikimate-3-phosphate and inorganic phosphate. This chain is 3-phosphoshikimate 1-carboxyvinyltransferase, found in Neisseria meningitidis serogroup C / serotype 2a (strain ATCC 700532 / DSM 15464 / FAM18).